The primary structure comprises 688 residues: Polyribonucleotide nucleotidyltransferase (688 aa).

The Mg(2+) site is built by Asp-484 and Asp-490. The 60-residue stretch at 550–609 (PTTEIFNVAPDKIVEIIGQGGRVIREIVEKFEVKIDLNKPSGEVKIMGNKERVLKTKEFI) folds into the KH domain. One can recognise an S1 motif domain in the interval 626–688 (DEVLEAQVKR…NKGKIALDLA (63 aa)).

Belongs to the polyribonucleotide nucleotidyltransferase family. The cofactor is Mg(2+).

It localises to the cytoplasm. It catalyses the reaction RNA(n+1) + phosphate = RNA(n) + a ribonucleoside 5'-diphosphate. Its function is as follows. Involved in mRNA degradation. Catalyzes the phosphorolysis of single-stranded polyribonucleotides processively in the 3'- to 5'-direction. The chain is Polyribonucleotide nucleotidyltransferase from Helicobacter pylori (strain Shi470).